Here is a 133-residue protein sequence, read N- to C-terminus: Phosphoribosyl-ATP pyrophosphatase (133 aa).

The interval 1-22 (MGKPATKPAPKPSKQQDDKKSD) is disordered.

It belongs to the PRA-PH family.

It is found in the cytoplasm. The catalysed reaction is 1-(5-phospho-beta-D-ribosyl)-ATP + H2O = 1-(5-phospho-beta-D-ribosyl)-5'-AMP + diphosphate + H(+). The protein operates within amino-acid biosynthesis; L-histidine biosynthesis; L-histidine from 5-phospho-alpha-D-ribose 1-diphosphate: step 2/9. In Gluconobacter oxydans (strain 621H) (Gluconobacter suboxydans), this protein is Phosphoribosyl-ATP pyrophosphatase.